The primary structure comprises 891 residues: Putative alpha,alpha-trehalose-phosphate synthase [UDP-forming] 100 kDa subunit (891 aa).

The residue at position 88 (Thr88) is a Phosphothreonine. Positions 88-126 (TGGSMTPGLGAMSPIPGSGRSSPLYTQPRSRATSPSRVR) are disordered. Residues 106–124 (GRSSPLYTQPRSRATSPSR) show a composition bias toward polar residues. 2 positions are modified to phosphoserine: Ser108 and Ser109. The interval 132–613 (AAPGIGAGAL…VTGFETKLKK (482 aa)) is glycosyltransferase.

It in the N-terminal section; belongs to the glycosyltransferase 20 family.

It catalyses the reaction D-glucose 6-phosphate + UDP-alpha-D-glucose = alpha,alpha-trehalose 6-phosphate + UDP + H(+). This Schizosaccharomyces pombe (strain 972 / ATCC 24843) (Fission yeast) protein is Putative alpha,alpha-trehalose-phosphate synthase [UDP-forming] 100 kDa subunit.